Reading from the N-terminus, the 389-residue chain is Phospho-N-acetylmuramoyl-pentapeptide-transferase (389 aa).

Helical transmembrane passes span 25-45 (RAVMATITALVIGLVCGPWVI), 73-93 (TMGGVLILIGIAVATLLWGDL), 97-117 (FIWIVMLVTFGFGVIGWVDDY), 135-155 (FWQSVIGLFAAVYLAFSVSEA), 190-210 (ISYPLGVWGFIALTYFVIVGA), 222-242 (GLVIMPVVLVGASLGVFAYVM), 258-278 (GAGELLIFCSAMGGAGLAFLW), 286-306 (VFMGDVGALALGGALGTVAVI), 311-331 (IVLFIMGGIFVAETLSVMLQV), and 366-386 (QVVVRFWIITLMLCLFGLSTL).

It belongs to the glycosyltransferase 4 family. MraY subfamily. Mg(2+) serves as cofactor.

The protein localises to the cell inner membrane. It catalyses the reaction UDP-N-acetyl-alpha-D-muramoyl-L-alanyl-gamma-D-glutamyl-meso-2,6-diaminopimeloyl-D-alanyl-D-alanine + di-trans,octa-cis-undecaprenyl phosphate = di-trans,octa-cis-undecaprenyl diphospho-N-acetyl-alpha-D-muramoyl-L-alanyl-D-glutamyl-meso-2,6-diaminopimeloyl-D-alanyl-D-alanine + UMP. The protein operates within cell wall biogenesis; peptidoglycan biosynthesis. Its function is as follows. Catalyzes the initial step of the lipid cycle reactions in the biosynthesis of the cell wall peptidoglycan: transfers peptidoglycan precursor phospho-MurNAc-pentapeptide from UDP-MurNAc-pentapeptide onto the lipid carrier undecaprenyl phosphate, yielding undecaprenyl-pyrophosphoryl-MurNAc-pentapeptide, known as lipid I. The sequence is that of Phospho-N-acetylmuramoyl-pentapeptide-transferase from Burkholderia pseudomallei (strain 1106a).